We begin with the raw amino-acid sequence, 970 residues long: Vacuolar membrane protease (970 aa).

Residues 1-12 (MTTADSNSSATR) show a composition bias toward polar residues. The tract at residues 1–35 (MTTADSNSSATRGSHEMADGSNRVPNDEPYHRKSP) is disordered. At 1-56 (MTTADSNSSATRGSHEMADGSNRVPNDEPYHRKSPESCENANFFVRAMRASFGYRK) the chain is on the cytoplasmic side. The segment covering 25-35 (PNDEPYHRKSP) has biased composition (basic and acidic residues). A helical transmembrane segment spans residues 57 to 77 (TSLTILVFLSVIATVLLSYYD). The Vacuolar segment spans residues 78-397 (SSLEFSVSLP…FVVPMTFVFG (320 aa)). N-linked (GlcNAc...) asparagine glycans are attached at residues N146 and N173. Residues H187 and D199 each coordinate Zn(2+). The active-site Proton acceptor is E234. Residues E235, E260, and H333 each coordinate Zn(2+). A helical transmembrane segment spans residues 398–418 (VNVLLMVLVPLVSLISLALIF). Over 419-423 (AHRKW) the chain is Cytoplasmic. A helical transmembrane segment spans residues 424–444 (SVSLVTFFKFPLSFILSIFLL). Residues 445 to 465 (DNFSSWFVVSVNNFLPNSSAG) are Vacuolar-facing. N446 and N461 each carry an N-linked (GlcNAc...) asparagine glycan. The helical transmembrane segment at 466–486 (IIALTYFSFFVLANYLLLNGI) threads the bilayer. At 487 to 502 (NLLFWKFKGTRHDEKL) the chain is on the cytoplasmic side. The helical transmembrane segment at 503–523 (VVILQISFMFWVSLIWSTANI) threads the bilayer. Residues 524–535 (AKSQFNGEHSGE) lie on the Vacuolar side of the membrane. A helical membrane pass occupies residues 536–556 (FLLTLLYILQAAGGVFGLLCW). The Cytoplasmic segment spans residues 557 to 620 (LFKRSRTVHT…PTKHYSYDWS (64 aa)). Residues 621-641 (IQFLFIVPISSFLSYNYGWLI) traverse the membrane as a helical segment. At 642–658 (LEGLKKTLQESATSEYL) the chain is on the vacuolar side. Residues 659–679 (VFRALKLLAVVVAVPYLPFIF) form a helical membrane-spanning segment. Over 680 to 683 (KVNR) the chain is Cytoplasmic. A helical transmembrane segment spans residues 684 to 704 (IVFLVTIFLFVYGLGAIVISE). The Vacuolar portion of the chain corresponds to 705 to 970 (PFTEANPLKL…LVNVKKSVLV (266 aa)). N-linked (GlcNAc...) asparagine glycosylation is found at N738, N797, and N877.

The protein belongs to the peptidase M28 family. The cofactor is Zn(2+).

It is found in the vacuole membrane. Its function is as follows. May be involved in vacuolar sorting and osmoregulation. The protein is Vacuolar membrane protease of Meyerozyma guilliermondii (strain ATCC 6260 / CBS 566 / DSM 6381 / JCM 1539 / NBRC 10279 / NRRL Y-324) (Yeast).